The following is a 267-amino-acid chain: 4-hydroxy-tetrahydrodipicolinate reductase (267 aa).

NAD(+) contacts are provided by residues 8–13 (GAAGRM) and aspartate 34. Arginine 35 is a binding site for NADP(+). NAD(+)-binding positions include 98 to 100 (GTT) and 122 to 125 (AANF). The active-site Proton donor/acceptor is the histidine 155. Residue histidine 156 coordinates (S)-2,3,4,5-tetrahydrodipicolinate. Lysine 159 (proton donor) is an active-site residue. 165-166 (GT) lines the (S)-2,3,4,5-tetrahydrodipicolinate pocket.

The protein belongs to the DapB family.

The protein resides in the cytoplasm. It carries out the reaction (S)-2,3,4,5-tetrahydrodipicolinate + NAD(+) + H2O = (2S,4S)-4-hydroxy-2,3,4,5-tetrahydrodipicolinate + NADH + H(+). The enzyme catalyses (S)-2,3,4,5-tetrahydrodipicolinate + NADP(+) + H2O = (2S,4S)-4-hydroxy-2,3,4,5-tetrahydrodipicolinate + NADPH + H(+). It participates in amino-acid biosynthesis; L-lysine biosynthesis via DAP pathway; (S)-tetrahydrodipicolinate from L-aspartate: step 4/4. Catalyzes the conversion of 4-hydroxy-tetrahydrodipicolinate (HTPA) to tetrahydrodipicolinate. In Pseudomonas putida (strain ATCC 47054 / DSM 6125 / CFBP 8728 / NCIMB 11950 / KT2440), this protein is 4-hydroxy-tetrahydrodipicolinate reductase.